We begin with the raw amino-acid sequence, 309 residues long: Methionyl-tRNA formyltransferase (309 aa).

Position 112–115 (112–115 (SLLP)) interacts with (6S)-5,6,7,8-tetrahydrofolate.

It belongs to the Fmt family.

It catalyses the reaction L-methionyl-tRNA(fMet) + (6R)-10-formyltetrahydrofolate = N-formyl-L-methionyl-tRNA(fMet) + (6S)-5,6,7,8-tetrahydrofolate + H(+). In terms of biological role, attaches a formyl group to the free amino group of methionyl-tRNA(fMet). The formyl group appears to play a dual role in the initiator identity of N-formylmethionyl-tRNA by promoting its recognition by IF2 and preventing the misappropriation of this tRNA by the elongation apparatus. The sequence is that of Methionyl-tRNA formyltransferase from Bartonella bacilliformis (strain ATCC 35685 / KC583 / Herrer 020/F12,63).